Reading from the N-terminus, the 277-residue chain is 4-hydroxy-tetrahydrodipicolinate reductase (277 aa).

NAD(+) contacts are provided by residues 10–15 (GAGGRM) and glutamate 36. NADP(+) is bound at residue arginine 37. NAD(+) is bound by residues 100–102 (GTT) and 124–127 (SGNM). Histidine 158 acts as the Proton donor/acceptor in catalysis. Position 159 (histidine 159) interacts with (S)-2,3,4,5-tetrahydrodipicolinate. Lysine 162 serves as the catalytic Proton donor. A (S)-2,3,4,5-tetrahydrodipicolinate-binding site is contributed by 168-169 (GT).

This sequence belongs to the DapB family.

It localises to the cytoplasm. The catalysed reaction is (S)-2,3,4,5-tetrahydrodipicolinate + NAD(+) + H2O = (2S,4S)-4-hydroxy-2,3,4,5-tetrahydrodipicolinate + NADH + H(+). It carries out the reaction (S)-2,3,4,5-tetrahydrodipicolinate + NADP(+) + H2O = (2S,4S)-4-hydroxy-2,3,4,5-tetrahydrodipicolinate + NADPH + H(+). Its pathway is amino-acid biosynthesis; L-lysine biosynthesis via DAP pathway; (S)-tetrahydrodipicolinate from L-aspartate: step 4/4. In terms of biological role, catalyzes the conversion of 4-hydroxy-tetrahydrodipicolinate (HTPA) to tetrahydrodipicolinate. The polypeptide is 4-hydroxy-tetrahydrodipicolinate reductase (Chelativorans sp. (strain BNC1)).